Consider the following 191-residue polypeptide: Probable GTP-binding protein EngB (191 aa).

The region spanning 22–190 (RLPEIAFLGR…WQAITTTLQA (169 aa)) is the EngB-type G domain. GTP contacts are provided by residues 30–37 (GRSNVGKS), 57–61 (GRTQT), 75–78 (DLPG), 142–145 (TKTD), and 169–171 (FSA). Residues Ser37 and Thr59 each coordinate Mg(2+).

This sequence belongs to the TRAFAC class TrmE-Era-EngA-EngB-Septin-like GTPase superfamily. EngB GTPase family. The cofactor is Mg(2+).

In terms of biological role, necessary for normal cell division and for the maintenance of normal septation. The polypeptide is Probable GTP-binding protein EngB (Solibacter usitatus (strain Ellin6076)).